The primary structure comprises 1240 residues: Cohesin subunit SA-3 (1240 aa).

The segment covering 1-25 (MPTLWSPSTQHHGSSSGSESSPLQK) has biased composition (low complexity). Residues 1–108 (MPTLWSPSTQ…VSSGNGKNES (108 aa)) form a disordered region. Positions 97–108 (RIVSSGNGKNES) are enriched in polar residues. The SCD domain maps to 324 to 409 (FVHRYRDILP…NRFKDRMVSM (86 aa)). Disordered regions lie at residues 1077–1154 (AEAS…PELI) and 1213–1240 (DKMLHSPSSPSEHGLDLLDTTELNMEDF). A compositionally biased stretch (polar residues) spans 1115–1125 (GPTTPTLTSTA). Over residues 1126–1141 (VKRKQSLRTVGKKQKG) the composition is skewed to basic residues. S1218 is modified (phosphoserine).

It belongs to the SCC3 family. Component of the meiosis-specific cohesin complex, which also contains the SMC1 (SMC1A or SMC1B) and SMC3 heterodimer. Such complex likely contains RAD21, or the meiosis-specific related protein REC8. Interacts with CCDC79/TERB1; recruiting cohesin to telomeres to develop structural rigidity. Phosphorylated. Testis specific.

Its subcellular location is the nucleus. The protein resides in the chromosome. It is found in the centromere. Meiosis specific component of cohesin complex. The cohesin complex is required for the cohesion of sister chromatids after DNA replication. The cohesin complex apparently forms a large proteinaceous ring within which sister chromatids can be trapped. At anaphase, the complex is cleaved and dissociates from chromatin, allowing sister chromatids to segregate. The meiosis-specific cohesin complex probably replaces mitosis specific cohesin complex when it dissociates from chromatin during prophase I. The chain is Cohesin subunit SA-3 (Stag3) from Mus musculus (Mouse).